The sequence spans 63 residues: Alpha-conotoxin-like PuSG1.1 (63 aa).

The first 21 residues, methionine 1–glycine 21, serve as a signal peptide directing secretion. Positions alanine 22–arginine 43 are excised as a propeptide. 2 disulfides stabilise this stretch: cysteine 46-cysteine 52 and cysteine 47-cysteine 60. Positions proline 48–proline 50 are lacks the Ser-Xaa-Pro motif that is crucial for potent interaction with nAChR.

The protein belongs to the conotoxin A superfamily. Expressed by the salivary gland.

The protein resides in the secreted. Functionally, alpha-conopeptides-like may act on postsynaptic membranes, they bind to the nicotinic acetylcholine receptors (nAChR) and thus inhibit them. Has possibly a distinct nAChR binding mode from other alpha-conotoxins, due to a different three residue motif (lacks the Ser-Xaa-Pro motif). The chain is Alpha-conotoxin-like PuSG1.1 from Conus pulicarius (Flea-bitten cone).